Here is a 105-residue protein sequence, read N- to C-terminus: Putative membrane protein insertion efficiency factor (105 aa).

It belongs to the UPF0161 family.

The protein localises to the cell inner membrane. In terms of biological role, could be involved in insertion of integral membrane proteins into the membrane. In Nitratidesulfovibrio vulgaris (strain DSM 19637 / Miyazaki F) (Desulfovibrio vulgaris), this protein is Putative membrane protein insertion efficiency factor.